The chain runs to 108 residues: uncharacterized protein (108 aa).

The tract at residues 81–108 (FKCLDSPPPVPPSSSQGEDEENTVDSQY) is disordered. Residues 97-108 (GEDEENTVDSQY) are compositionally biased toward acidic residues.

This is an uncharacterized protein from Saccharomyces cerevisiae (strain ATCC 204508 / S288c) (Baker's yeast).